Consider the following 141-residue polypeptide: 3-hydroxyacyl-[acyl-carrier-protein] dehydratase FabZ (141 aa).

Histidine 47 is a catalytic residue.

It belongs to the thioester dehydratase family. FabZ subfamily.

It is found in the cytoplasm. It carries out the reaction a (3R)-hydroxyacyl-[ACP] = a (2E)-enoyl-[ACP] + H2O. Functionally, involved in unsaturated fatty acids biosynthesis. Catalyzes the dehydration of short chain beta-hydroxyacyl-ACPs and long chain saturated and unsaturated beta-hydroxyacyl-ACPs. In Caldanaerobacter subterraneus subsp. tengcongensis (strain DSM 15242 / JCM 11007 / NBRC 100824 / MB4) (Thermoanaerobacter tengcongensis), this protein is 3-hydroxyacyl-[acyl-carrier-protein] dehydratase FabZ.